The sequence spans 294 residues: MINGIINLKKEAGMTSHDAVFKLRKLLQEKKIGHGGTLDPDVVGVLPIAVGKATRVIEYMTEAGKVYEGQVTLGYSTTTEDASGEVVARSSLPAVLTEELVDQTMTTFLGKITQTPPMYSAVKVNGRKLYEYARAGESVERPRREVTISQFERTSPLNFTEDDLCRFSFKVACSKGTYVRTLAVDLGRALGVESHMSFLQRSASAGLTLETAYTLGEIADMVSKQEMSFLLPIEYGVADLPKMVIDDTELTEISFGRRLSLPSQEPLLAAFHGEKVIAILEKRDQEYKPKKVLI.

The active-site Nucleophile is the aspartate 39.

It belongs to the pseudouridine synthase TruB family. Type 1 subfamily.

The catalysed reaction is uridine(55) in tRNA = pseudouridine(55) in tRNA. In terms of biological role, responsible for synthesis of pseudouridine from uracil-55 in the psi GC loop of transfer RNAs. This Streptococcus pyogenes serotype M2 (strain MGAS10270) protein is tRNA pseudouridine synthase B.